Reading from the N-terminus, the 214-residue chain is tRNA (guanine-N(7)-)-methyltransferase (214 aa).

S-adenosyl-L-methionine contacts are provided by glutamate 44, glutamate 69, aspartate 96, and aspartate 118. Residue aspartate 118 is part of the active site. Position 122 (lysine 122) interacts with substrate. The segment at 124-129 is interaction with RNA; that stretch reads RHEKRR. Substrate-binding positions include aspartate 154 and 192–195; that span reads TEYE.

The protein belongs to the class I-like SAM-binding methyltransferase superfamily. TrmB family.

The enzyme catalyses guanosine(46) in tRNA + S-adenosyl-L-methionine = N(7)-methylguanosine(46) in tRNA + S-adenosyl-L-homocysteine. It participates in tRNA modification; N(7)-methylguanine-tRNA biosynthesis. Catalyzes the formation of N(7)-methylguanine at position 46 (m7G46) in tRNA. This chain is tRNA (guanine-N(7)-)-methyltransferase, found in Lacticaseibacillus casei (strain BL23) (Lactobacillus casei).